The primary structure comprises 49 residues: Large ribosomal subunit protein eL40 (49 aa).

Belongs to the eukaryotic ribosomal protein eL40 family.

In Methanosarcina barkeri (strain Fusaro / DSM 804), this protein is Large ribosomal subunit protein eL40.